The chain runs to 794 residues: cAMP and cAMP-inhibited cGMP 3',5'-cyclic phosphodiesterase 10A (794 aa).

3',5'-cyclic AMP is bound by residues Arg-296–Cys-297, Ile-340–Ala-341, Thr-374, Gln-393, and His-525. In terms of domain architecture, PDEase spans Thr-452 to Glu-769. The active-site Proton donor is the His-525. His-525 serves as a coordination point for 3',5'-cyclic GMP. 4 residues coordinate a divalent metal cation: His-529, His-563, Asp-564, and Asp-674. Gln-726 contributes to the 3',5'-cyclic AMP binding site. Gln-726 serves as a coordination point for 3',5'-cyclic GMP.

This sequence belongs to the cyclic nucleotide phosphodiesterase family. Homodimer. Requires a divalent metal cation as cofactor. As to expression, detected in striatum and testis (at protein level). Detected in whole brain, hippocampus, olfactory bulb, striatum neurons and testis.

The protein resides in the cytoplasm. It is found in the cytosol. It carries out the reaction a nucleoside 3',5'-cyclic phosphate + H2O = a nucleoside 5'-phosphate + H(+). The enzyme catalyses 3',5'-cyclic AMP + H2O = AMP + H(+). The catalysed reaction is 3',5'-cyclic GMP + H2O = GMP + H(+). It functions in the pathway purine metabolism; 3',5'-cyclic AMP degradation; AMP from 3',5'-cyclic AMP: step 1/1. It participates in purine metabolism; 3',5'-cyclic GMP degradation; GMP from 3',5'-cyclic GMP: step 1/1. Inhibited by dipyridamole and moderately by IBMX, zaprinast and rolipram. Its function is as follows. Plays a role in signal transduction by regulating the intracellular concentration of cyclic nucleotides. Can hydrolyze both cAMP and cGMP, but has higher affinity for cAMP and is more efficient with cAMP as substrate. This Rattus norvegicus (Rat) protein is cAMP and cAMP-inhibited cGMP 3',5'-cyclic phosphodiesterase 10A (Pde10a).